Reading from the N-terminus, the 308-residue chain is tRNA pseudouridine synthase B (308 aa).

D48 functions as the Nucleophile in the catalytic mechanism.

The protein belongs to the pseudouridine synthase TruB family. Type 1 subfamily.

It catalyses the reaction uridine(55) in tRNA = pseudouridine(55) in tRNA. Functionally, responsible for synthesis of pseudouridine from uracil-55 in the psi GC loop of transfer RNAs. In Histophilus somni (strain 129Pt) (Haemophilus somnus), this protein is tRNA pseudouridine synthase B.